A 36-amino-acid polypeptide reads, in one-letter code: Pancreatic polypeptide (36 aa).

A Tyrosine amide modification is found at Tyr36.

Belongs to the NPY family.

It is found in the secreted. Functionally, hormone secreted by pancreatic cells that acts as a regulator of pancreatic and gastrointestinal functions probably by signaling through the G protein-coupled receptor NPY4R2. In Tapirus pinchaque (Mountain tapir), this protein is Pancreatic polypeptide (PPY).